The primary structure comprises 228 residues: Ribose-5-phosphate isomerase A (228 aa).

Substrate-binding positions include 26-29, 81-84, and 94-97; these read SGST, DGAD, and KGGG. Residue Glu-103 is the Proton acceptor of the active site. Lys-121 lines the substrate pocket.

Belongs to the ribose 5-phosphate isomerase family. Homodimer.

The enzyme catalyses aldehydo-D-ribose 5-phosphate = D-ribulose 5-phosphate. It participates in carbohydrate degradation; pentose phosphate pathway; D-ribose 5-phosphate from D-ribulose 5-phosphate (non-oxidative stage): step 1/1. Its function is as follows. Catalyzes the reversible conversion of ribose-5-phosphate to ribulose 5-phosphate. The protein is Ribose-5-phosphate isomerase A of Shouchella clausii (strain KSM-K16) (Alkalihalobacillus clausii).